Consider the following 358-residue polypeptide: Cinnamyl alcohol dehydrogenase 1 (358 aa).

One can recognise an Enoyl reductase (ER) domain in the interval 21 to 349; that stretch reads GILTPYTYTL…KNDVRYRFVV (329 aa). Cys48 is a Zn(2+) binding site. Ser50 provides a ligand contact to NADP(+). Zn(2+)-binding residues include His70, Glu71, Cys101, Cys104, Cys107, Cys115, and Cys164. Residues Thr168, 189-194, 212-217, Thr252, Gly276, and 299-301 each bind NADP(+); these read GLGGVG, SSSDKK, and SFV.

This sequence belongs to the zinc-containing alcohol dehydrogenase family. Homodimer. Zn(2+) is required as a cofactor.

It catalyses the reaction (E)-cinnamyl alcohol + NADP(+) = (E)-cinnamaldehyde + NADPH + H(+). It carries out the reaction (E)-coniferol + NADP(+) = (E)-coniferaldehyde + NADPH + H(+). The catalysed reaction is (E)-sinapyl alcohol + NADP(+) = (E)-sinapaldehyde + NADPH + H(+). The enzyme catalyses (E)-4-coumaroyl alcohol + NADP(+) = (E)-4-coumaraldehyde + NADPH + H(+). The protein operates within aromatic compound metabolism; phenylpropanoid biosynthesis. Functionally, involved in lignin biosynthesis. Catalyzes the final step specific for the production of lignin monomers. Catalyzes the NADPH-dependent reduction of coniferaldehyde, 5-hydroxyconiferaldehyde, sinapaldehyde, 4-coumaraldehyde and caffeyl aldehyde to their respective alcohols. Can use coumaraldehyde and, with a lower efficiency, coniferaldehyde and sinapaldehyde as substrates. The protein is Cinnamyl alcohol dehydrogenase 1 of Medicago truncatula (Barrel medic).